The primary structure comprises 130 residues: Glycine cleavage system H protein (130 aa).

A Lipoyl-binding domain is found at 24 to 106 (TLTIGITDHA…YGEGWIMRIR (83 aa)). Lys65 carries the N6-lipoyllysine modification. The tract at residues 111-130 (DDLEQLLDPEDYQDLVADEE) is disordered.

The protein belongs to the GcvH family. The glycine cleavage system is composed of four proteins: P, T, L and H. The cofactor is (R)-lipoate.

Its function is as follows. The glycine cleavage system catalyzes the degradation of glycine. The H protein shuttles the methylamine group of glycine from the P protein to the T protein. This chain is Glycine cleavage system H protein, found in Alkalilimnicola ehrlichii (strain ATCC BAA-1101 / DSM 17681 / MLHE-1).